Here is a 93-residue protein sequence, read N- to C-terminus: Integration host factor subunit beta (93 aa).

It belongs to the bacterial histone-like protein family. As to quaternary structure, heterodimer of an alpha and a beta chain.

In terms of biological role, this protein is one of the two subunits of integration host factor, a specific DNA-binding protein that functions in genetic recombination as well as in transcriptional and translational control. The protein is Integration host factor subunit beta of Actinobacillus pleuropneumoniae serotype 7 (strain AP76).